Here is a 130-residue protein sequence, read N- to C-terminus: Protein ApaG (130 aa).

The 125-residue stretch at 3-127 folds into the ApaG domain; that stretch reads SAMTRSINIL…FSLDSPHAKR (125 aa).

This is Protein ApaG from Parvibaculum lavamentivorans (strain DS-1 / DSM 13023 / NCIMB 13966).